We begin with the raw amino-acid sequence, 631 residues long: Nucleoside triphosphatase I (631 aa).

Residues 42–204 (FLGLDTMHSI…TMIVNLLRPK (163 aa)) enclose the Helicase ATP-binding domain. ATP is bound at residue 55 to 62 (HDTGVGKT). The DEXH box signature appears at 141 to 144 (DECH). One can recognise a Helicase C-terminal domain in the interval 367 to 536 (KFTEVCLKIL…LFKVFKESSI (170 aa)). The interval 457–524 (DIFILDMTWN…NIIKTKSKEF (68 aa)) is binding to the cap-specific mRNA (nucleoside-2'-O-)-methyltransferase.

It belongs to the helicase family. NPH I subfamily. As to quaternary structure, monomer. Interacts (via C-terminus) with RAP94 (via N-terminus). Interacts with the cap-specific mRNA (nucleoside-2'-O-)-methyltransferase.

The protein resides in the virion. It carries out the reaction a ribonucleoside 5'-triphosphate + H2O = a ribonucleoside 5'-diphosphate + phosphate + H(+). Its function is as follows. DNA-dependent ATPase required for providing the needed energy to achieve the termination of early transcripts. Acts in concert with the RAP94 subunit of the virion RNA polymerase and the capping enzyme/VTF to catalyze release of UUUUUNU-containing nascent RNA from the elongation complex. NPH-I must bind ssDNA in order to exhibit ATPase activity. In Erythrocebus patas (Red guenon), this protein is Nucleoside triphosphatase I (NPH1).